The chain runs to 484 residues: Glycogen synthase 2 (484 aa).

Arginine 15 is an ADP-alpha-D-glucose binding site.

Belongs to the glycosyltransferase 1 family. Bacterial/plant glycogen synthase subfamily.

It carries out the reaction [(1-&gt;4)-alpha-D-glucosyl](n) + ADP-alpha-D-glucose = [(1-&gt;4)-alpha-D-glucosyl](n+1) + ADP + H(+). The protein operates within glycan biosynthesis; glycogen biosynthesis. Its function is as follows. Synthesizes alpha-1,4-glucan chains using ADP-glucose. The chain is Glycogen synthase 2 from Geobacter sulfurreducens (strain ATCC 51573 / DSM 12127 / PCA).